Consider the following 451-residue polypeptide: 23S rRNA (uracil(1939)-C(5))-methyltransferase RlmD (451 aa).

Residues Q20–R78 enclose the TRAM domain. C91, C97, C100, and C179 together coordinate [4Fe-4S] cluster. Positions 283, 312, 317, 333, 360, and 381 each coordinate S-adenosyl-L-methionine. The active-site Nucleophile is the C407.

It belongs to the class I-like SAM-binding methyltransferase superfamily. RNA M5U methyltransferase family. RlmD subfamily.

The catalysed reaction is uridine(1939) in 23S rRNA + S-adenosyl-L-methionine = 5-methyluridine(1939) in 23S rRNA + S-adenosyl-L-homocysteine + H(+). Its function is as follows. Catalyzes the formation of 5-methyl-uridine at position 1939 (m5U1939) in 23S rRNA. In Pseudomonas savastanoi pv. phaseolicola (strain 1448A / Race 6) (Pseudomonas syringae pv. phaseolicola (strain 1448A / Race 6)), this protein is 23S rRNA (uracil(1939)-C(5))-methyltransferase RlmD.